We begin with the raw amino-acid sequence, 403 residues long: Phosphopentomutase (403 aa).

Mn(2+) contacts are provided by Asp13, Asp298, His303, Asp339, His340, and His351.

The protein belongs to the phosphopentomutase family. Mn(2+) serves as cofactor.

The protein resides in the cytoplasm. It carries out the reaction 2-deoxy-alpha-D-ribose 1-phosphate = 2-deoxy-D-ribose 5-phosphate. The enzyme catalyses alpha-D-ribose 1-phosphate = D-ribose 5-phosphate. It functions in the pathway carbohydrate degradation; 2-deoxy-D-ribose 1-phosphate degradation; D-glyceraldehyde 3-phosphate and acetaldehyde from 2-deoxy-alpha-D-ribose 1-phosphate: step 1/2. Isomerase that catalyzes the conversion of deoxy-ribose 1-phosphate (dRib-1-P) and ribose 1-phosphate (Rib-1-P) to deoxy-ribose 5-phosphate (dRib-5-P) and ribose 5-phosphate (Rib-5-P), respectively. The polypeptide is Phosphopentomutase (Streptococcus pyogenes serotype M5 (strain Manfredo)).